The sequence spans 59 residues: UPF0509 protein KPN78578_12530 (59 aa).

It belongs to the UPF0509 family.

This Klebsiella pneumoniae subsp. pneumoniae (strain ATCC 700721 / MGH 78578) protein is UPF0509 protein KPN78578_12530.